A 295-amino-acid chain; its full sequence is Protein FAM110A (295 aa).

Disordered regions lie at residues 117-148 (PVSPAEASRTPGRAEGARQPPLATPPRPPPSI) and 160-191 (PASPIQPCPSPGPAAASSPVRPPGLQRSKSDL). Composition is skewed to pro residues over residues 138-147 (LATPPRPPPS) and 160-171 (PASPIQPCPSPG).

Belongs to the FAM110 family. In terms of assembly, may interact with CSPP1.

The protein resides in the cytoplasm. The protein localises to the cytoskeleton. It localises to the microtubule organizing center. It is found in the centrosome. Its subcellular location is the spindle pole. This is Protein FAM110A (FAM110A) from Bos taurus (Bovine).